We begin with the raw amino-acid sequence, 116 residues long: Ribosome-binding factor A (116 aa).

This sequence belongs to the RbfA family. In terms of assembly, monomer. Binds 30S ribosomal subunits, but not 50S ribosomal subunits or 70S ribosomes.

It is found in the cytoplasm. One of several proteins that assist in the late maturation steps of the functional core of the 30S ribosomal subunit. Associates with free 30S ribosomal subunits (but not with 30S subunits that are part of 70S ribosomes or polysomes). Required for efficient processing of 16S rRNA. May interact with the 5'-terminal helix region of 16S rRNA. The protein is Ribosome-binding factor A of Buchnera aphidicola subsp. Cinara cedri (strain Cc).